The chain runs to 261 residues: Hemin import ATP-binding protein HmuV (261 aa).

Residues 5–241 (YTAENLTFTR…DALAHWYGAQ (237 aa)) form the ABC transporter domain. Position 37-44 (37-44 (GPNGAGKS)) interacts with ATP.

This sequence belongs to the ABC transporter superfamily. Heme (hemin) importer (TC 3.A.1.14.5) family. In terms of assembly, the complex is composed of two ATP-binding proteins (HmuV), two transmembrane proteins (HmuU) and a solute-binding protein (HmuT).

It is found in the cell inner membrane. Functionally, part of the ABC transporter complex HmuTUV involved in hemin import. Responsible for energy coupling to the transport system. This is Hemin import ATP-binding protein HmuV from Enterobacter cloacae.